A 382-amino-acid chain; its full sequence is Mannitol-1-phosphate 5-dehydrogenase (382 aa).

3 to 14 is an NAD(+) binding site; sequence ALHFGAGNIGRG. K269 carries the post-translational modification N6-acetyllysine.

This sequence belongs to the mannitol dehydrogenase family.

It catalyses the reaction D-mannitol 1-phosphate + NAD(+) = beta-D-fructose 6-phosphate + NADH + H(+). In Escherichia coli O17:K52:H18 (strain UMN026 / ExPEC), this protein is Mannitol-1-phosphate 5-dehydrogenase.